The chain runs to 220 residues: Large ribosomal subunit protein bL21c (220 aa).

This sequence belongs to the bacterial ribosomal protein bL21 family. As to quaternary structure, part of the 50S ribosomal subunit.

The protein resides in the plastid. It localises to the chloroplast. Its function is as follows. This protein binds to 23S ribosomal RNA in the presence of protein L20. This chain is Large ribosomal subunit protein bL21c (RPL21), found in Arabidopsis thaliana (Mouse-ear cress).